The primary structure comprises 2084 residues: RNA-directed RNA polymerase L (2084 aa).

Positions 20-221 are endonuclease; the sequence is EPGLYDQIYD…IELQKSEEEL (202 aa). Positions 80, 112, and 126 each coordinate Mn(2+). The active-site For endonuclease activity is Lys145. One can recognise a RdRp catalytic domain in the interval 969-1172; that stretch reads SARSLGPGSI…FGIYSSEKST (204 aa). Asp1127 serves as a coordination point for Mg(2+). The interval 1695–1810 is cap-binding; that stretch reads AQSGTLGGFS…TDGCPVRIME (116 aa).

Belongs to the Bunyavirales RNA polymerase family. As to quaternary structure, homomultimer. Interacts with the glycoprotein N; this interaction allows efficient polymerase packaging into virus particles. Interacts with nucleoprotein N. The cofactor is Mn(2+). It depends on Mg(2+) as a cofactor.

Its subcellular location is the host Golgi apparatus. It localises to the host endoplasmic reticulum. The protein resides in the host endoplasmic reticulum-Golgi intermediate compartment. It is found in the virion. It carries out the reaction RNA(n) + a ribonucleoside 5'-triphosphate = RNA(n+1) + diphosphate. With respect to regulation, inhibited by Baloxavir acid (BXA). Its function is as follows. RNA-dependent RNA polymerase, which is responsible for the replication and transcription of the viral RNA genome using antigenomic RNA as an intermediate. During transcription, synthesizes subgenomic RNAs and assures their capping by a cap-snatching mechanism, which involves the endonuclease activity cleaving the host capped pre-mRNAs. These short capped RNAs are then used as primers for viral transcription. The 3'-end of subgenomic mRNAs molecules are not polyadenylated. During replication, the polymerase binds the 5' and 3' vRNA extremities at distinct sites. In turn, significant conformational changes occur in the polymerase and in vRNA to initiate active RNA synthesis. As a consequence of the use of the same enzyme for both transcription and replication, these mechanisms need to be well coordinated. The protein is RNA-directed RNA polymerase L of Dabie bandavirus (Severe fever with thrombocytopenia virus).